The primary structure comprises 254 residues: Diphthine synthase (254 aa).

Residues Asp83, Leu86, 111 to 112, Leu163, and Val205 contribute to the S-adenosyl-L-methionine site; that span reads SI.

Belongs to the diphthine synthase family. Homodimer.

It carries out the reaction 2-[(3S)-amino-3-carboxypropyl]-L-histidyl-[translation elongation factor 2] + 3 S-adenosyl-L-methionine = diphthine-[translation elongation factor 2] + 3 S-adenosyl-L-homocysteine + 3 H(+). Its pathway is protein modification; peptidyl-diphthamide biosynthesis. S-adenosyl-L-methionine-dependent methyltransferase that catalyzes the trimethylation of the amino group of the modified target histidine residue in translation elongation factor 2 (EF-2), to form an intermediate called diphthine. The three successive methylation reactions represent the second step of diphthamide biosynthesis. The polypeptide is Diphthine synthase (Pyrobaculum aerophilum (strain ATCC 51768 / DSM 7523 / JCM 9630 / CIP 104966 / NBRC 100827 / IM2)).